We begin with the raw amino-acid sequence, 208 residues long: Uracil phosphoribosyltransferase (208 aa).

5-phospho-alpha-D-ribose 1-diphosphate is bound by residues Arg-78, Arg-103, and 130-138; that span reads DPMLATGGS. Uracil is bound by residues Ile-193 and 198–200; that span reads GDA. Asp-199 contacts 5-phospho-alpha-D-ribose 1-diphosphate.

It belongs to the UPRTase family. Mg(2+) serves as cofactor.

The enzyme catalyses UMP + diphosphate = 5-phospho-alpha-D-ribose 1-diphosphate + uracil. Its pathway is pyrimidine metabolism; UMP biosynthesis via salvage pathway; UMP from uracil: step 1/1. Allosterically activated by GTP. In terms of biological role, catalyzes the conversion of uracil and 5-phospho-alpha-D-ribose 1-diphosphate (PRPP) to UMP and diphosphate. The protein is Uracil phosphoribosyltransferase of Neisseria gonorrhoeae (strain ATCC 700825 / FA 1090).